The sequence spans 525 residues: MAAVVLAATRLLRGSGSWGCSRLRFGPPAYRRFSSGGAYPNIPLSSPLPGVPKPVFATVDGQEKFETKVTTLDNGLRVASQNKFGQFCTVGILINSGSRYEAKYLSGIAHFLEKLAFSSTARFDSKDEILLTLEKHGGICDCQTSRDTTMYAVSADSKGLDTVVALLADVVLQPRLTDEEVEMTRMAVQFELEDLNLRPDPEPLLTEMIHEAAYRENTVGLHRFCPTENVAKINREVLHSYLRNYYTPDRMVLAGVGVEHEHLVDCARKYLLGVQPAWGSAEAVDIDRSVAQYTGGIAKLERDMSNVSLGPTPIPELTHIMVGLESCSFLEEDFIPFAVLNMMMGGGGSFSAGGPGKGMFSRLYLNVLNRHHWMYNATSYHHSYEDTGLLCIHASADPRQVREMVEIITKEFILMGGTVDTVELERAKTQLTSMLMMNLESRPVIFEDVGRQVLATRSRKLPHELCTLIRNVKPEDVKRVASKMLRGKPAVAALGDLTDLPTYEHIQTALSSKDGRLPRTYRLFR.

The N-terminal 33 residues, 1-33, are a transit peptide targeting the mitochondrion; sequence MAAVVLAATRLLRGSGSWGCSRLRFGPPAYRRF. K64 carries the N6-succinyllysine modification. K299 bears the N6-acetyllysine mark.

The protein belongs to the peptidase M16 family. Heterodimer of PMPCA (alpha) and PMPCB (beta) subunits, forming the mitochondrial processing protease (MPP) in which PMPCA is involved in substrate recognition and binding and PMPCB is the catalytic subunit. In terms of tissue distribution, ubiquitously expressed with highest expression in fetal tissues and adult brain, cerebellum and cerebellar vermis.

It is found in the mitochondrion matrix. The protein localises to the mitochondrion inner membrane. Its function is as follows. Substrate recognition and binding subunit of the essential mitochondrial processing protease (MPP), which cleaves the mitochondrial sequence off newly imported precursors proteins. The sequence is that of Mitochondrial-processing peptidase subunit alpha (PMPCA) from Homo sapiens (Human).